We begin with the raw amino-acid sequence, 300 residues long: tRNA dimethylallyltransferase (300 aa).

9–16 is an ATP binding site; that stretch reads GPTASGKS. 11–16 contributes to the substrate binding site; that stretch reads TASGKS. Residues 34–37 form an interaction with substrate tRNA region; it reads DSKQ.

The protein belongs to the IPP transferase family. In terms of assembly, monomer. Requires Mg(2+) as cofactor.

The catalysed reaction is adenosine(37) in tRNA + dimethylallyl diphosphate = N(6)-dimethylallyladenosine(37) in tRNA + diphosphate. Catalyzes the transfer of a dimethylallyl group onto the adenine at position 37 in tRNAs that read codons beginning with uridine, leading to the formation of N6-(dimethylallyl)adenosine (i(6)A). The polypeptide is tRNA dimethylallyltransferase (Ehrlichia ruminantium (strain Welgevonden)).